Here is a 360-residue protein sequence, read N- to C-terminus: Uptake hydrogenase small subunit (360 aa).

Residues methionine 1 to alanine 43 constitute a signal peptide (tat-type signal). Residues cysteine 60, cysteine 63, cysteine 158, cysteine 192, histidine 230, cysteine 233, cysteine 258, and cysteine 264 each coordinate [4Fe-4S] cluster. Cysteine 273, cysteine 292, and cysteine 295 together coordinate [3Fe-4S] cluster.

It belongs to the [NiFe]/[NiFeSe] hydrogenase small subunit family. Heterodimer of a large and a small subunit. [4Fe-4S] cluster serves as cofactor. [3Fe-4S] cluster is required as a cofactor. In terms of processing, predicted to be exported by the Tat system. The position of the signal peptide cleavage has been experimentally proven.

It is found in the cell membrane. The enzyme catalyses H2 + A = AH2. In terms of biological role, this enzyme recycles the H(2) produced by nitrogenase to increase the production of ATP and to protect nitrogenase against inhibition or damage by O(2) under carbon- or phosphate-limited conditions. The protein is Uptake hydrogenase small subunit (hoxK) of Cupriavidus necator (strain ATCC 17699 / DSM 428 / KCTC 22496 / NCIMB 10442 / H16 / Stanier 337) (Ralstonia eutropha).